We begin with the raw amino-acid sequence, 464 residues long: UDP-N-acetylmuramate--L-alanine ligase (464 aa).

112-118 (GTHGKTT) contributes to the ATP binding site.

Belongs to the MurCDEF family.

It is found in the cytoplasm. The enzyme catalyses UDP-N-acetyl-alpha-D-muramate + L-alanine + ATP = UDP-N-acetyl-alpha-D-muramoyl-L-alanine + ADP + phosphate + H(+). It functions in the pathway cell wall biogenesis; peptidoglycan biosynthesis. Functionally, cell wall formation. This is UDP-N-acetylmuramate--L-alanine ligase from Acidithiobacillus ferrooxidans (strain ATCC 23270 / DSM 14882 / CIP 104768 / NCIMB 8455) (Ferrobacillus ferrooxidans (strain ATCC 23270)).